The primary structure comprises 351 residues: GDSL esterase/lipase At3g53100 (351 aa).

An N-terminal signal peptide occupies residues 1–24 (MQKMRVSGFRVLLLVSCFFCKSKG). The Nucleophile role is filled by Ser-36. N-linked (GlcNAc...) asparagine glycans are attached at residues Asn-234, Asn-254, and Asn-318. Active-site residues include Asp-326 and His-329.

This sequence belongs to the 'GDSL' lipolytic enzyme family.

The protein localises to the secreted. The polypeptide is GDSL esterase/lipase At3g53100 (Arabidopsis thaliana (Mouse-ear cress)).